The sequence spans 430 residues: Tol-Pal system protein TolB (430 aa).

A signal peptide spans 1 to 21 (MKQALRVAFGFLILWASVLHA).

The protein belongs to the TolB family. As to quaternary structure, the Tol-Pal system is composed of five core proteins: the inner membrane proteins TolA, TolQ and TolR, the periplasmic protein TolB and the outer membrane protein Pal. They form a network linking the inner and outer membranes and the peptidoglycan layer.

It localises to the periplasm. Part of the Tol-Pal system, which plays a role in outer membrane invagination during cell division and is important for maintaining outer membrane integrity. TolB occupies a key intermediary position in the Tol-Pal system because it communicates directly with both membrane-embedded components, Pal in the outer membrane and TolA in the inner membrane. This Escherichia coli O8 (strain IAI1) protein is Tol-Pal system protein TolB.